Here is an 875-residue protein sequence, read N- to C-terminus: Peptidyl-glycine alpha-amidating monooxygenase B (875 aa).

The first 39 residues, 1–39, serve as a signal peptide directing secretion; the sequence is MDMASLISSLLVLFLIFQNSCYCFRSPLSVFKRYEESTR. The interval 3–394 is peptidylglycine alpha-hydroxylating monooxygenase; that stretch reads MASLISSLLV…KREEEEVLNQ (392 aa). At 40–763 the chain is on the intragranular side; the sequence is SLSNDCLGTT…PSVVQESSAG (724 aa). Disulfide bonds link C45–C184, C79–C124, C112–C129, C225–C332, and C291–C313. Cu(2+)-binding residues include H105 and H106. 4 residues coordinate Cu(2+): H170, H240, H242, and M312. The peptidyl-alpha-hydroxyglycine alpha-amidating lyase stretch occupies residues 395–716; it reads DVHLEEDTDW…SPSKAEHRSV (322 aa). An a protein-binding site is contributed by R430. The N-linked (GlcNAc...) asparagine glycan is linked to N465. 3 NHL repeats span residues 467-508, 516-561, and 569-613; these read SKVL…VGAE, LGRA…FSPN, and GEET…FHAK. 2 disulfide bridges follow: C530-C551 and C598-C609. A protein is bound by residues Y550 and R602. N662 carries an N-linked (GlcNAc...) asparagine glycan. An NHL 4 repeat occupies 666 to 709; the sequence is GDILDTFIPARKNFEMPHDIAAGDDGTVYVGDAHANAVWKFSPS. The interval 735 to 755 is disordered; it reads HMRSRPKTNESVGQQTQEKPS. N743 carries N-linked (GlcNAc...) asparagine glycosylation. Residues 743–755 show a composition bias toward polar residues; the sequence is NESVGQQTQEKPS. The chain crosses the membrane as a helical span at residues 764-787; sequence VSFVLIITLLIIPVVVLIAIAIFI. The Cytoplasmic portion of the chain corresponds to 788–875; it reads RWRKVRMYGG…APPIPPVSSS (88 aa). Residues 837–875 form a disordered region; the sequence is KGFDRLSTEGSDQEKDDDDDGSDSEEEYSAPPIPPVSSS. Positions 850–864 are enriched in acidic residues; it reads EKDDDDDGSDSEEEY.

In the C-terminal section; belongs to the peptidyl-alpha-hydroxyglycine alpha-amidating lyase family. The protein in the N-terminal section; belongs to the copper type II ascorbate-dependent monooxygenase family. Monomer. It depends on Zn(2+) as a cofactor. The cofactor is Cu(2+).

It is found in the cytoplasmic vesicle. The protein resides in the secretory vesicle membrane. It catalyses the reaction a [peptide]-C-terminal glycine + 2 L-ascorbate + O2 = a [peptide]-C-terminal (2S)-2-hydroxyglycine + 2 monodehydro-L-ascorbate radical + H2O. The enzyme catalyses a [peptide]-C-terminal (2S)-2-hydroxyglycine = a [peptide]-C-terminal amide + glyoxylate. In terms of biological role, bifunctional enzyme that catalyzes amidation of the C-terminus of proteins. Alpha-amidation is present at the C-terminus of many endocrine hormones and neuropeptides and is required for their activity. C-terminal amidation also takes place in response to protein fragmentation triggered by oxidative stress, promoting degradation of amidated protein fragments by the proteasome. Alpha-amidation involves two sequential reactions, both of which are catalyzed by separate catalytic domains of the enzyme. The first step, catalyzed by peptidyl alpha-hydroxylating monooxygenase (PHM) domain, is the copper-, ascorbate-, and O2- dependent stereospecific hydroxylation (with S stereochemistry) at the alpha-carbon (C-alpha) of the C-terminal glycine of the peptidylglycine substrate. The second step, catalyzed by the peptidylglycine amidoglycolate lyase (PAL) domain, is the zinc-dependent cleavage of the N-C-alpha bond, producing the alpha-amidated peptide and glyoxylate. The sequence is that of Peptidyl-glycine alpha-amidating monooxygenase B (pam-b) from Xenopus laevis (African clawed frog).